The chain runs to 235 residues: MKNFSKRMTTLLSKVEERSYSPIEAIKLVKENANAKFDETIEAHIRLGIDPKYTDQQLRTTVALPSGTGQKIRIAVVTRGEKVNEATKAGADLAGEEDLVDSINKGEMNFDLLISTPDMMPKVAKLGRVLGPRGLMPNPKAGTVTTDLEGAIKEFKAGKLEFRADKAGIVHVRFGKASFSEEALLENLKTLQTTIEKNKPSGAKGKFWRSFFITSTMGPSVEVDINELQDLQKEK.

Belongs to the universal ribosomal protein uL1 family. Part of the 50S ribosomal subunit.

In terms of biological role, binds directly to 23S rRNA. The L1 stalk is quite mobile in the ribosome, and is involved in E site tRNA release. Functionally, protein L1 is also a translational repressor protein, it controls the translation of the L11 operon by binding to its mRNA. This chain is Large ribosomal subunit protein uL1, found in Prochlorococcus marinus (strain NATL1A).